Reading from the N-terminus, the 472-residue chain is Methanethiol oxidase (472 aa).

An N-acetylalanine modification is found at Ala2. Ser111, Ser371, and Ser467 each carry phosphoserine.

Belongs to the selenium-binding protein family. As to quaternary structure, interacts with USP33. In terms of processing, the N-terminus is blocked.

The protein localises to the nucleus. It localises to the cytoplasm. The protein resides in the cytosol. It is found in the membrane. The enzyme catalyses methanethiol + O2 + H2O = hydrogen sulfide + formaldehyde + H2O2 + H(+). Its pathway is organosulfur degradation. In terms of biological role, catalyzes the oxidation of methanethiol, an organosulfur compound known to be produced in substantial amounts by gut bacteria. Selenium-binding protein which may be involved in the sensing of reactive xenobiotics in the cytoplasm. May be involved in intra-Golgi protein transport. The sequence is that of Methanethiol oxidase (SELENBP1) from Pongo abelii (Sumatran orangutan).